Here is a 147-residue protein sequence, read N- to C-terminus: E3 ubiquitin-protein ligase RHA2B (147 aa).

The segment at 74–116 adopts an RING-type; atypical zinc-finger fold; that stretch reads CIVCLSKLKTGEEVRKLDCRHVFHKQCLEGWLQHLNFNCPLCR.

Interacts with NAC19. In terms of tissue distribution, expressed in vascular tissue, root tips, embryos and pistils.

The protein localises to the cytoplasm. The protein resides in the nucleus. It carries out the reaction S-ubiquitinyl-[E2 ubiquitin-conjugating enzyme]-L-cysteine + [acceptor protein]-L-lysine = [E2 ubiquitin-conjugating enzyme]-L-cysteine + N(6)-ubiquitinyl-[acceptor protein]-L-lysine.. Its pathway is protein modification; protein ubiquitination. In terms of biological role, E3 ubiquitin-protein ligase involved in the positive regulation of abscisic acid (ABA) signaling and responses to salt and osmotic stresses during seed germination and early seedling development. Acts additively with RHA2A in regulating ABA signaling and drought response. Possesses E3 ubiquitin ligase activity in vitro. This chain is E3 ubiquitin-protein ligase RHA2B, found in Arabidopsis thaliana (Mouse-ear cress).